The sequence spans 438 residues: Succinyl-CoA:glutarate CoA-transferase (438 aa).

Residues 1–31 (MLATLARVAALRRTCLFSGRGGGRGLWTGRP) constitute a mitochondrion transit peptide. The active-site Nucleophile is Asp-205. Lys-394 carries the N6-acetyllysine modification.

Belongs to the CoA-transferase III family. Highly expressed in kidney. Intermediate expression in liver, skeletal muscle and pancreas. Little to no expression detected in other tissues examined.

Its subcellular location is the mitochondrion. The enzyme catalyses glutarate + succinyl-CoA = glutaryl-CoA + succinate. It carries out the reaction 3-hydroxy-3-methylglutarate + succinyl-CoA = (3S)-3-hydroxy-3-methylglutaryl-CoA + succinate. The catalysed reaction is 3-hydroxy-3-methylglutarate + glutaryl-CoA = (3S)-3-hydroxy-3-methylglutaryl-CoA + glutarate. It catalyses the reaction hexanedioate + glutaryl-CoA = hexanedioyl-CoA + glutarate. The enzyme catalyses itaconate + glutaryl-CoA = itaconyl-CoA + glutarate. It carries out the reaction itaconate + succinyl-CoA = itaconyl-CoA + succinate. Inhibited by valsartan and losartan carboxylate. In terms of biological role, coenzyme A (CoA) transferase that reversibly catalyzes the transfer of a CoA moiety from a dicarboxyl-CoA to a dicarboxylate in a metabolite recycling process. Displays preference for succinyl-CoA and glutarate-CoA as dicarboxyl-CoA donors and glutarate, succinate, adipate/hexanedioate, itaconate and 3-hydroxy-3-methylglutarate as dicarboxylate acceptors. Acts on intermediates or end products of lysine and tryptophan degradation pathway, in particular catalyzes succinyl-CoA-dependent reesterification of free glutarate into glutaryl-CoA to prevent renal excretion of glutarate. Upon inflammation, may convert macrophage-derived itaconate to itaconyl-CoA in erythroid precursors where it negatively regulates the TCA cycle and heme synthesis to limit erythroid differentiation in the context of stress erythropoiesis. The polypeptide is Succinyl-CoA:glutarate CoA-transferase (Homo sapiens (Human)).